The following is a 342-amino-acid chain: MNQAAQTVATISAEALRQTARNTHALPEDARWRVDDVAALFALPFNDLLFRAQQVHRENFDANTVQLSTLLSIKTGGCEEDCGYCPQSAHHDAGVKAEKLMELDEVLEAARAAKANGATRFCMGAAWRSPKDRHLEPVMDMVREVKAMGLETCVTLGMLKAEQAQQLKDAGLDYYNHNLDTSPEFYGKIITTRTYQDRLDTIGHVRDAGINVCCGGIVGMGESREARAGLIAQLANMDPYPESVPINNLVQVEGTPLAGTEALDPFEFVRTIAVARITMPGAMVRLSAGREAMDEALQALCFMAGANSIFYGEKLLTTGNPQADRDRALLARLDIRAEGYAG.

The Radical SAM core domain maps to 63–290; sequence NTVQLSTLLS…GAMVRLSAGR (228 aa). 3 residues coordinate [4Fe-4S] cluster: Cys78, Cys82, and Cys85. Positions 122, 153, 213, and 285 each coordinate [2Fe-2S] cluster.

It belongs to the radical SAM superfamily. Biotin synthase family. Homodimer. [4Fe-4S] cluster serves as cofactor. [2Fe-2S] cluster is required as a cofactor.

It carries out the reaction (4R,5S)-dethiobiotin + (sulfur carrier)-SH + 2 reduced [2Fe-2S]-[ferredoxin] + 2 S-adenosyl-L-methionine = (sulfur carrier)-H + biotin + 2 5'-deoxyadenosine + 2 L-methionine + 2 oxidized [2Fe-2S]-[ferredoxin]. The protein operates within cofactor biosynthesis; biotin biosynthesis; biotin from 7,8-diaminononanoate: step 2/2. Catalyzes the conversion of dethiobiotin (DTB) to biotin by the insertion of a sulfur atom into dethiobiotin via a radical-based mechanism. The protein is Biotin synthase of Cupriavidus pinatubonensis (strain JMP 134 / LMG 1197) (Cupriavidus necator (strain JMP 134)).